Reading from the N-terminus, the 1396-residue chain is DNA-directed RNA polymerase subunit beta' (1396 aa).

Residues Cys-72, Cys-74, Cys-87, and Cys-90 each coordinate Zn(2+). Mg(2+) contacts are provided by Asp-463, Asp-465, and Asp-467. Residues Cys-814, Cys-889, Cys-896, and Cys-899 each coordinate Zn(2+).

The protein belongs to the RNA polymerase beta' chain family. The RNAP catalytic core consists of 2 alpha, 1 beta, 1 beta' and 1 omega subunit. When a sigma factor is associated with the core the holoenzyme is formed, which can initiate transcription. The cofactor is Mg(2+). Zn(2+) is required as a cofactor.

The catalysed reaction is RNA(n) + a ribonucleoside 5'-triphosphate = RNA(n+1) + diphosphate. DNA-dependent RNA polymerase catalyzes the transcription of DNA into RNA using the four ribonucleoside triphosphates as substrates. This Chlamydia trachomatis serovar L2 (strain ATCC VR-902B / DSM 19102 / 434/Bu) protein is DNA-directed RNA polymerase subunit beta'.